The sequence spans 447 residues: tRNA threonylcarbamoyladenosine dehydratase 2 (447 aa).

Helical transmembrane passes span 9-29 (LITA…YAWT), 86-106 (NQYV…NSLV), and 294-314 (ILPV…TWIL).

Belongs to the HesA/MoeB/ThiF family.

It is found in the mitochondrion outer membrane. Functionally, catalyzes the ATP-dependent dehydration of threonylcarbamoyladenosine at position 37 (t(6)A37) to form cyclic t(6)A37 (ct(6)A37) in tRNAs that read codons beginning with adenine. The polypeptide is tRNA threonylcarbamoyladenosine dehydratase 2 (TCD2) (Saccharomyces cerevisiae (strain ATCC 204508 / S288c) (Baker's yeast)).